We begin with the raw amino-acid sequence, 327 residues long: Zinc transport protein ZntB (327 aa).

Residues 1–271 (MESFAGKELQ…AMNRRTYTMS (271 aa)) are Cytoplasmic-facing. A helical membrane pass occupies residues 272–292 (LLAMVFLPTTFLTGLFGVNLG). Topologically, residues 293–300 (GIPGGDAP) are periplasmic. The chain crosses the membrane as a helical span at residues 301-321 (FGFFTFCLMLVILVGGVAWWL). Residues 322–327 (KRSKWL) are Cytoplasmic-facing.

It belongs to the CorA metal ion transporter (MIT) (TC 1.A.35) family.

The protein localises to the cell inner membrane. The enzyme catalyses Zn(2+)(out) + H(+)(out) = Zn(2+)(in) + H(+)(in). In terms of biological role, zinc transporter. Acts as a Zn(2+):proton symporter, which likely mediates zinc ion uptake. The polypeptide is Zinc transport protein ZntB (Pectobacterium carotovorum subsp. carotovorum (strain PC1)).